The primary structure comprises 541 residues: Chaperonin GroEL (541 aa).

Residues 29–32, 86–90, G413, and D494 each bind ATP; these read TIGP and DGTTT.

Belongs to the chaperonin (HSP60) family. Forms a cylinder of 14 subunits composed of two heptameric rings stacked back-to-back. Interacts with the co-chaperonin GroES.

The protein resides in the cytoplasm. The catalysed reaction is ATP + H2O + a folded polypeptide = ADP + phosphate + an unfolded polypeptide.. Functionally, together with its co-chaperonin GroES, plays an essential role in assisting protein folding. The GroEL-GroES system forms a nano-cage that allows encapsulation of the non-native substrate proteins and provides a physical environment optimized to promote and accelerate protein folding. The sequence is that of Chaperonin GroEL from Lachnospira eligens (strain ATCC 27750 / DSM 3376 / VPI C15-48 / C15-B4) (Eubacterium eligens).